The sequence spans 148 residues: Small ribosomal subunit protein uS7c (148 aa).

This sequence belongs to the universal ribosomal protein uS7 family. Part of the 30S ribosomal subunit.

It is found in the plastid. It localises to the chloroplast. In terms of biological role, one of the primary rRNA binding proteins, it binds directly to 16S rRNA where it nucleates assembly of the head domain of the 30S subunit. This chain is Small ribosomal subunit protein uS7c (rps7), found in Cyanidioschyzon merolae (strain NIES-3377 / 10D) (Unicellular red alga).